The sequence spans 361 residues: Queuine tRNA-ribosyltransferase (361 aa).

The Proton acceptor role is filled by Asp92. Residues 92–96 (DSGGF), Asp146, Gln189, and Gly216 each bind substrate. The RNA binding stretch occupies residues 247–253 (GVGKPVD). Residue Asp266 is the Nucleophile of the active site. Positions 271-275 (TRSGR) are RNA binding; important for wobble base 34 recognition. Residues Cys304, Cys306, Cys309, and His335 each contribute to the Zn(2+) site.

It belongs to the queuine tRNA-ribosyltransferase family. In terms of assembly, homodimer. Within each dimer, one monomer is responsible for RNA recognition and catalysis, while the other monomer binds to the replacement base PreQ1. Zn(2+) serves as cofactor.

It carries out the reaction 7-aminomethyl-7-carbaguanine + guanosine(34) in tRNA = 7-aminomethyl-7-carbaguanosine(34) in tRNA + guanine. Its pathway is tRNA modification; tRNA-queuosine biosynthesis. In terms of biological role, catalyzes the base-exchange of a guanine (G) residue with the queuine precursor 7-aminomethyl-7-deazaguanine (PreQ1) at position 34 (anticodon wobble position) in tRNAs with GU(N) anticodons (tRNA-Asp, -Asn, -His and -Tyr). Catalysis occurs through a double-displacement mechanism. The nucleophile active site attacks the C1' of nucleotide 34 to detach the guanine base from the RNA, forming a covalent enzyme-RNA intermediate. The proton acceptor active site deprotonates the incoming PreQ1, allowing a nucleophilic attack on the C1' of the ribose to form the product. After dissociation, two additional enzymatic reactions on the tRNA convert PreQ1 to queuine (Q), resulting in the hypermodified nucleoside queuosine (7-(((4,5-cis-dihydroxy-2-cyclopenten-1-yl)amino)methyl)-7-deazaguanosine). In Rickettsia africae (strain ESF-5), this protein is Queuine tRNA-ribosyltransferase.